We begin with the raw amino-acid sequence, 229 residues long: Peptidase E (229 aa).

Active-site charge relay system residues include Ser-120, Asp-135, and His-157.

It belongs to the peptidase S51 family.

It localises to the cytoplasm. It carries out the reaction Dipeptidase E catalyzes the hydrolysis of dipeptides Asp-|-Xaa. It does not act on peptides with N-terminal Glu, Asn or Gln, nor does it cleave isoaspartyl peptides.. In terms of biological role, hydrolyzes dipeptides containing N-terminal aspartate residues. May play a role in allowing the cell to use peptide aspartate to spare carbon otherwise required for the synthesis of the aspartate family of amino acids. The polypeptide is Peptidase E (Salmonella newport (strain SL254)).